The primary structure comprises 297 residues: Magnetosome protein MamB (297 aa).

Residues 1 to 12 (MKFENCRDCREE) are Cytoplasmic-facing. The transmembrane domain (TMD) stretch occupies residues 1–214 (MKFENCRDCR…GLMDSSVDTE (214 aa)). A helical membrane pass occupies residues 13-33 (VVWWAFTADICMTLFKGILGL). Over 34 to 83 (MSGSVALVADSLHSGADVVASGVTQLSLKISNKPADERYPFGYGNIQYIS) the chain is Lumenal. Residues 84-104 (SAIVGSLLLIGASFLMYGSVV) traverse the membrane as a helical segment. The Cytoplasmic portion of the chain corresponds to 105–112 (KLISGTYE). Residues 113–133 (APSIFAALGASVTVIVNELMY) traverse the membrane as a helical segment. The Lumenal portion of the chain corresponds to 134 to 164 (RYQICVGNENNSPAIIANAWDNRSDAISSAA). The helical transmembrane segment at 165-185 (VMVGVIASVIGFPIADTIAAI) threads the bilayer. Residues 186–297 (GVSALVGHIG…PAPAAVTVRV (112 aa)) lie on the Cytoplasmic side of the membrane. The segment at 215-297 (LLQTAWQIAT…PAPAAVTVRV (83 aa)) is C-terminal domain (CTD).

The protein belongs to the cation diffusion facilitator (CDF) transporter (TC 2.A.4) family. Forms homodimers via its C-terminal domain, may form higher order multimers that are sensitive to reducing agent. Probably interacts with MamE. Interacts with MamM via their C-terminal domains.

It is found in the cell inner membrane. It localises to the magnetosome membrane. In terms of biological role, plays a dual, essential role in magnetosome formation; required for magnetosome vesicle formation as well as biomineralization. Requires heterodimerization with MamM for stability. Probably binds and transports iron. One of 7 genes (mamLQBIEMO) able to induce magnetosome membrane biogenesis; coexpression of mamLQRBIEMO in a deletion of the 17 gene mamAB operon restores magnetosome vesicle formation but not magnetite biosynthesis. The chain is Magnetosome protein MamB from Magnetospirillum gryphiswaldense (strain DSM 6361 / JCM 21280 / NBRC 15271 / MSR-1).